Consider the following 402-residue polypeptide: Endo-polygalacturonase (402 aa).

A signal peptide spans 1–23 (MEYQSGKRVLSLSLGLIGLFSAS). 2 cysteine pairs are disulfide-bonded: Cys41–Cys62 and Cys115–Cys125. Catalysis depends on Asp249, which acts as the Proton donor. His277 is a catalytic residue.

It belongs to the glycosyl hydrolase 28 family. Monomer.

It is found in the secreted. It carries out the reaction (1,4-alpha-D-galacturonosyl)n+m + H2O = (1,4-alpha-D-galacturonosyl)n + (1,4-alpha-D-galacturonosyl)m.. Functionally, involved in maceration and soft-rotting of plant tissue. This is Endo-polygalacturonase (pehA) from Pectobacterium parmentieri.